Reading from the N-terminus, the 124-residue chain is Small ribosomal subunit protein uS12 (124 aa).

At aspartate 89 the chain carries 3-methylthioaspartic acid. The segment at 105–124 is disordered; sequence QGVKNRKQARSRYGAKKEKS. A compositionally biased stretch (basic residues) spans 108 to 118; that stretch reads KNRKQARSRYG.

It belongs to the universal ribosomal protein uS12 family. Part of the 30S ribosomal subunit. Contacts proteins S8 and S17. May interact with IF1 in the 30S initiation complex.

In terms of biological role, with S4 and S5 plays an important role in translational accuracy. Interacts with and stabilizes bases of the 16S rRNA that are involved in tRNA selection in the A site and with the mRNA backbone. Located at the interface of the 30S and 50S subunits, it traverses the body of the 30S subunit contacting proteins on the other side and probably holding the rRNA structure together. The combined cluster of proteins S8, S12 and S17 appears to hold together the shoulder and platform of the 30S subunit. The sequence is that of Small ribosomal subunit protein uS12 from Mycobacterium leprae (strain Br4923).